The following is a 151-amino-acid chain: Putative pre-16S rRNA nuclease (151 aa).

The protein belongs to the YqgF nuclease family.

Its subcellular location is the cytoplasm. In terms of biological role, could be a nuclease involved in processing of the 5'-end of pre-16S rRNA. The protein is Putative pre-16S rRNA nuclease of Prochlorococcus marinus subsp. pastoris (strain CCMP1986 / NIES-2087 / MED4).